We begin with the raw amino-acid sequence, 379 residues long: Queuine tRNA-ribosyltransferase (379 aa).

D89 acts as the Proton acceptor in catalysis. Substrate is bound by residues 89 to 93 (DSGGF), D143, Q187, and G214. Residues 245-251 (GVGKPED) are RNA binding. Catalysis depends on D264, which acts as the Nucleophile. The segment at 269–273 (TRNAR) is RNA binding; important for wobble base 34 recognition. Residues C302, C304, C307, and H333 each contribute to the Zn(2+) site.

The protein belongs to the queuine tRNA-ribosyltransferase family. As to quaternary structure, homodimer. Within each dimer, one monomer is responsible for RNA recognition and catalysis, while the other monomer binds to the replacement base PreQ1. The cofactor is Zn(2+).

It carries out the reaction 7-aminomethyl-7-carbaguanine + guanosine(34) in tRNA = 7-aminomethyl-7-carbaguanosine(34) in tRNA + guanine. The protein operates within tRNA modification; tRNA-queuosine biosynthesis. Catalyzes the base-exchange of a guanine (G) residue with the queuine precursor 7-aminomethyl-7-deazaguanine (PreQ1) at position 34 (anticodon wobble position) in tRNAs with GU(N) anticodons (tRNA-Asp, -Asn, -His and -Tyr). Catalysis occurs through a double-displacement mechanism. The nucleophile active site attacks the C1' of nucleotide 34 to detach the guanine base from the RNA, forming a covalent enzyme-RNA intermediate. The proton acceptor active site deprotonates the incoming PreQ1, allowing a nucleophilic attack on the C1' of the ribose to form the product. After dissociation, two additional enzymatic reactions on the tRNA convert PreQ1 to queuine (Q), resulting in the hypermodified nucleoside queuosine (7-(((4,5-cis-dihydroxy-2-cyclopenten-1-yl)amino)methyl)-7-deazaguanosine). In Edwardsiella ictaluri (strain 93-146), this protein is Queuine tRNA-ribosyltransferase.